The primary structure comprises 321 residues: tRNA U34 carboxymethyltransferase (321 aa).

Residues K90, W104, K109, G129, 151–153, 180–181, M195, Y199, and R314 each bind carboxy-S-adenosyl-L-methionine; these read DPT and IE.

The protein belongs to the class I-like SAM-binding methyltransferase superfamily. CmoB family. In terms of assembly, homotetramer.

The catalysed reaction is carboxy-S-adenosyl-L-methionine + 5-hydroxyuridine(34) in tRNA = 5-carboxymethoxyuridine(34) in tRNA + S-adenosyl-L-homocysteine + H(+). Its function is as follows. Catalyzes carboxymethyl transfer from carboxy-S-adenosyl-L-methionine (Cx-SAM) to 5-hydroxyuridine (ho5U) to form 5-carboxymethoxyuridine (cmo5U) at position 34 in tRNAs. In Actinobacillus succinogenes (strain ATCC 55618 / DSM 22257 / CCUG 43843 / 130Z), this protein is tRNA U34 carboxymethyltransferase.